The following is a 343-amino-acid chain: RNA-binding protein 43 (343 aa).

Positions 15–90 (RTVVVSGLPV…PLLTVSHFSE (76 aa)) constitute an RRM domain. The tract at residues 170–200 (RRNWTGQNPRRVLQKNENSAPTLGTSVPEPA) is disordered. A compositionally biased stretch (polar residues) spans 184–194 (KNENSAPTLGT).

This is RNA-binding protein 43 (Rbm43) from Rattus norvegicus (Rat).